We begin with the raw amino-acid sequence, 176 residues long: V-type proton ATPase 16 kDa proteolipid subunit (176 aa).

Over 1 to 17 the chain is Lumenal; it reads MSVLLRSVTELCPVYSP. The helical transmembrane segment at 18–38 threads the bilayer; that stretch reads FFGSMGITASIVFTVFGGAYG. The Cytoplasmic portion of the chain corresponds to 39–62; that stretch reads TAKSSVGISSVGVMKPEFIMRSLF. The helical transmembrane segment at 63 to 83 threads the bilayer; it reads PVVFAGVIGLYGLIVCIVLFI. Over 84–98 the chain is Lumenal; the sequence is NVNKSEYSLNRAFLD. The helical transmembrane segment at 99–119 threads the bilayer; the sequence is LGAGLTCGLCGLASGMSIGIS. Residues 120 to 136 lie on the Cytoplasmic side of the membrane; the sequence is GDCGVRGAAQQPKLFVS. A helical transmembrane segment spans residues 137–157; it reads MLICLIFSEALALYGFIVALI. The Lumenal portion of the chain corresponds to 158–176; it reads MAATGDNSCVATASTSSSS.

This sequence belongs to the V-ATPase proteolipid subunit family. In terms of assembly, V-ATPase is a heteromultimeric enzyme composed of a peripheral catalytic V1 complex (main components: subunits A, B, C, D, E, and F) attached to an integral membrane V0 proton pore complex (main component: the proteolipid protein; which is present as a hexamer that forms the proton-conducting pore).

It is found in the vacuole membrane. In terms of biological role, proton-conducting pore forming subunit of the membrane integral V0 complex of vacuolar ATPase. V-ATPase is responsible for acidifying a variety of intracellular compartments in eukaryotic cells. The chain is V-type proton ATPase 16 kDa proteolipid subunit (VMA3) from Entamoeba dispar.